We begin with the raw amino-acid sequence, 426 residues long: Gamma-glutamyl phosphate reductase (426 aa).

This sequence belongs to the gamma-glutamyl phosphate reductase family.

The protein localises to the cytoplasm. It catalyses the reaction L-glutamate 5-semialdehyde + phosphate + NADP(+) = L-glutamyl 5-phosphate + NADPH + H(+). It functions in the pathway amino-acid biosynthesis; L-proline biosynthesis; L-glutamate 5-semialdehyde from L-glutamate: step 2/2. Its function is as follows. Catalyzes the NADPH-dependent reduction of L-glutamate 5-phosphate into L-glutamate 5-semialdehyde and phosphate. The product spontaneously undergoes cyclization to form 1-pyrroline-5-carboxylate. This is Gamma-glutamyl phosphate reductase from Delftia acidovorans (strain DSM 14801 / SPH-1).